The primary structure comprises 163 residues: Crossover junction endodeoxyribonuclease RuvC (163 aa).

Active-site residues include D7, E68, and H142. D7, E68, and H142 together coordinate Mg(2+).

The protein belongs to the RuvC family. As to quaternary structure, homodimer which binds Holliday junction (HJ) DNA. The HJ becomes 2-fold symmetrical on binding to RuvC with unstacked arms; it has a different conformation from HJ DNA in complex with RuvA. In the full resolvosome a probable DNA-RuvA(4)-RuvB(12)-RuvC(2) complex forms which resolves the HJ. The cofactor is Mg(2+).

The protein localises to the cytoplasm. It catalyses the reaction Endonucleolytic cleavage at a junction such as a reciprocal single-stranded crossover between two homologous DNA duplexes (Holliday junction).. In terms of biological role, the RuvA-RuvB-RuvC complex processes Holliday junction (HJ) DNA during genetic recombination and DNA repair. Endonuclease that resolves HJ intermediates. Cleaves cruciform DNA by making single-stranded nicks across the HJ at symmetrical positions within the homologous arms, yielding a 5'-phosphate and a 3'-hydroxyl group; requires a central core of homology in the junction. The consensus cleavage sequence is 5'-(A/T)TT(C/G)-3'. Cleavage occurs on the 3'-side of the TT dinucleotide at the point of strand exchange. HJ branch migration catalyzed by RuvA-RuvB allows RuvC to scan DNA until it finds its consensus sequence, where it cleaves and resolves the cruciform DNA. The sequence is that of Crossover junction endodeoxyribonuclease RuvC from Anaplasma phagocytophilum (strain HZ).